Consider the following 346-residue polypeptide: MAPGSVTSDISPSSTSTAGSSRSPESEKPGPSHGGVPPGGPSHSSLPVGRRHPPVLRMVLEALQAGEQRRGTSVAAIKLYILHKYPTVDVLRFKYLLKQALATGMRRGLLARPLNSKARGATGSFKLVPKHKKKIQPRKMAPATAPRRAGEAKGKGPKKPSEAKEDPPNVGKVKKAAKRPAKVQKPPPKPGAATEKARKQGGAAKDTRAQSGEARKVPPKPDKAMRAPSSAGGLSRKAKAKGSRSSQGDAEAYRKTKAESKSSKPTASKVKNGAASPTKKKVVAKAKAPKAGQGPNTKAAAPAKGSGSKVVPAHLSRKTEAPKGPRKAGLPIKASSSKVSSQRAEA.

Composition is skewed to low complexity over residues 1-23 and 38-48; these read MAPG…SSRS and PGGPSHSSLPV. Disordered regions lie at residues 1–50 and 121–346; these read MAPG…PVGR and ATGS…RAEA. In terms of domain architecture, H15 spans 51-129; sequence RHPPVLRMVL…GATGSFKLVP (79 aa). Over residues 128 to 137 the composition is skewed to basic residues; sequence VPKHKKKIQP. Over residues 148–167 the composition is skewed to basic and acidic residues; sequence RAGEAKGKGPKKPSEAKEDP. A Nuclear localization signal motif is present at residues 164–179; it reads KEDPPNVGKVKKAAKR. Over residues 172–182 the composition is skewed to basic residues; sequence KVKKAAKRPAK. Composition is skewed to basic and acidic residues over residues 205–225 and 251–262; these read KDTR…DKAM and EAYRKTKAESKS. Residues 278–288 show a composition bias toward basic residues; the sequence is TKKKVVAKAKA. Residues 298–309 are compositionally biased toward low complexity; the sequence is KAAAPAKGSGSK. Positions 334-346 are enriched in polar residues; sequence ASSSKVSSQRAEA.

Belongs to the histone H1/H5 family. In terms of tissue distribution, oocyte-specific.

It is found in the cytoplasm. The protein localises to the nucleus. It localises to the chromosome. In terms of biological role, may play a key role in the control of gene expression during oogenesis and early embryogenesis, presumably through the perturbation of chromatin structure. Essential for meiotic maturation of germinal vesicle-stage oocytes. The somatic type linker histone H1c is rapidly replaced by H1oo in a donor nucleus transplanted into an oocyte. The greater mobility of H1oo as compared to H1c may contribute to this rapid replacement and increased instability of the embryonic chromatin structure. The rapid replacement of H1c with H1oo may play an important role in nuclear remodeling. This Homo sapiens (Human) protein is Histone H1.8.